A 291-amino-acid polypeptide reads, in one-letter code: Transmembrane protein 41B (291 aa).

The disordered stretch occupies residues 1-38 (MAKGRVAERSQMGADHTTPVGDGAAGTRGPAAPGSRDY). Threonine 18 is modified (phosphothreonine). Over residues 21–34 (GDGAAGTRGPAAPG) the composition is skewed to low complexity. Position 35 is a phosphoserine (serine 35). The next 6 helical transmembrane spans lie at 52-72 (MSLL…FLVY), 109-129 (FYVQ…TFAI), 147-169 (LALF…LSYL), 197-217 (LINY…FINI), 225-245 (PLKV…FVAI), and 262-282 (SWNS…PAIF). Positions 140 to 251 (GFLYPFPLAL…FVAIKAGTTL (112 aa)) are VTT domain; required for its function in autophagy.

This sequence belongs to the TMEM41 family. As to quaternary structure, interacts with VMP1. Interacts with COPA, COPB1, VDAC1 and ERLIN2. Interacts with ATG2A. Interacts with SURF4.

The protein localises to the endoplasmic reticulum membrane. The protein resides in the endomembrane system. The enzyme catalyses a 1,2-diacyl-sn-glycero-3-phospho-L-serine(in) = a 1,2-diacyl-sn-glycero-3-phospho-L-serine(out). The catalysed reaction is cholesterol(in) = cholesterol(out). It catalyses the reaction a 1,2-diacyl-sn-glycero-3-phosphocholine(in) = a 1,2-diacyl-sn-glycero-3-phosphocholine(out). It carries out the reaction a 1,2-diacyl-sn-glycero-3-phosphoethanolamine(in) = a 1,2-diacyl-sn-glycero-3-phosphoethanolamine(out). Functionally, phospholipid scramblase involved in lipid homeostasis and membrane dynamics processes. Has phospholipid scramblase activity toward cholesterol and phosphatidylserine, as well as phosphatidylethanolamine and phosphatidylcholine. Required for autophagosome formation: participates in early stages of autophagosome biogenesis at the endoplasmic reticulum (ER) membrane by reequilibrating the leaflets of the ER as lipids are extracted by ATG2 (ATG2A or ATG2B) to mediate autophagosome assembly. In addition to autophagy, involved in other processes in which phospholipid scramblase activity is required. Required for normal motor neuron development. This is Transmembrane protein 41B from Pongo abelii (Sumatran orangutan).